Here is a 252-residue protein sequence, read N- to C-terminus: tRNA1(Val) (adenine(37)-N6)-methyltransferase (252 aa).

This sequence belongs to the methyltransferase superfamily. tRNA (adenine-N(6)-)-methyltransferase family.

Its subcellular location is the cytoplasm. It carries out the reaction adenosine(37) in tRNA1(Val) + S-adenosyl-L-methionine = N(6)-methyladenosine(37) in tRNA1(Val) + S-adenosyl-L-homocysteine + H(+). Functionally, specifically methylates the adenine in position 37 of tRNA(1)(Val) (anticodon cmo5UAC). The polypeptide is tRNA1(Val) (adenine(37)-N6)-methyltransferase (Yersinia pseudotuberculosis serotype O:3 (strain YPIII)).